Here is a 249-residue protein sequence, read N- to C-terminus: Exosome complex component Rrp41 (249 aa).

It belongs to the RNase PH family. Rrp41 subfamily. As to quaternary structure, component of the archaeal exosome complex. Forms a hexameric ring-like arrangement composed of 3 Rrp41-Rrp42 heterodimers. The hexameric ring associates with a trimer of Rrp4 and/or Csl4 subunits.

It is found in the cytoplasm. Its function is as follows. Catalytic component of the exosome, which is a complex involved in RNA degradation. Has 3'-&gt;5' exoribonuclease activity. Can also synthesize heteromeric RNA-tails. This Thermococcus gammatolerans (strain DSM 15229 / JCM 11827 / EJ3) protein is Exosome complex component Rrp41.